The primary structure comprises 147 residues: Probable disulfide formation protein (147 aa).

The helical transmembrane segment at 9-28 (NYSLYFAWLTALIATLGSLY) threads the bilayer. An intrachain disulfide couples Cys38 to Cys41. Transmembrane regions (helical) follow at residues 43 to 62 (YQRVCIYPLTILLGIAAYRT) and 69 to 86 (YALPLVVLGFLFSVYQYL). Residues Cys99 and Cys106 are joined by a disulfide bond. The helical transmembrane segment at 115-138 (GFITLPFLGMLATLIMSFFLIMAF) threads the bilayer.

This sequence belongs to the DsbB family. BdbC subfamily.

It is found in the cell inner membrane. Its function is as follows. Required for disulfide bond formation in some proteins. This is Probable disulfide formation protein from Coxiella burnetii (strain CbuG_Q212) (Coxiella burnetii (strain Q212)).